A 161-amino-acid chain; its full sequence is MNISLIAAISKNLVIGYKNKIPWYLPEDLKWFKQKTINKNIIMGRLTWESIKKKPLPMRKNIVISSNEIKQEGIIWADSISNAIISAQYNQEIMIIGGAKIYKEMLFYANKLYLTHIDIDIVGDAYFPEYKLYPYWKTLFRKKNTKNKMNPYNYSFEILSR.

The DHFR domain maps to 2–161 (NISLIAAISK…YNYSFEILSR (160 aa)). 6–8 (IAA) provides a ligand contact to substrate. Residues 7–8 (AA) and 15–20 (IGYKNK) each bind NADP(+). Asp28 serves as a coordination point for substrate. An NADP(+)-binding site is contributed by 44-47 (GRLT). A substrate-binding site is contributed by Arg59. Residues 64–66 (ISS) and 96–101 (IGGAKI) each bind NADP(+). Thr115 lines the substrate pocket.

It belongs to the dihydrofolate reductase family.

It carries out the reaction (6S)-5,6,7,8-tetrahydrofolate + NADP(+) = 7,8-dihydrofolate + NADPH + H(+). It functions in the pathway cofactor biosynthesis; tetrahydrofolate biosynthesis; 5,6,7,8-tetrahydrofolate from 7,8-dihydrofolate: step 1/1. In terms of biological role, key enzyme in folate metabolism. Catalyzes an essential reaction for de novo glycine and purine synthesis, and for DNA precursor synthesis. This is Dihydrofolate reductase (folA) from Buchnera aphidicola subsp. Acyrthosiphon pisum (strain APS) (Acyrthosiphon pisum symbiotic bacterium).